The chain runs to 180 residues: Shikimate kinase (180 aa).

An ATP-binding site is contributed by 14-19 (GAGKSC). Position 18 (serine 18) interacts with Mg(2+). Substrate contacts are provided by aspartate 36, arginine 60, and glycine 82. Position 120 (arginine 120) interacts with ATP. Arginine 139 provides a ligand contact to substrate.

This sequence belongs to the shikimate kinase family. Monomer. The cofactor is Mg(2+).

It localises to the cytoplasm. It carries out the reaction shikimate + ATP = 3-phosphoshikimate + ADP + H(+). Its pathway is metabolic intermediate biosynthesis; chorismate biosynthesis; chorismate from D-erythrose 4-phosphate and phosphoenolpyruvate: step 5/7. Functionally, catalyzes the specific phosphorylation of the 3-hydroxyl group of shikimic acid using ATP as a cosubstrate. This chain is Shikimate kinase, found in Xanthomonas campestris pv. campestris (strain 8004).